The following is a 152-amino-acid chain: 17.1 kDa class II heat shock protein (152 aa).

The sHSP domain maps to 36 to 152 (DAKAMAATPA…KPKTIQVKVA (117 aa)).

The protein belongs to the small heat shock protein (HSP20) family.

It localises to the cytoplasm. This chain is 17.1 kDa class II heat shock protein (HSP17.7), found in Pisum sativum (Garden pea).